Here is a 702-residue protein sequence, read N- to C-terminus: MARKTPIERYRNIGISAHIDAGKTTTTERILFYTGVNHKIGEVHDGAATMDWMEQEQERGITITSAATTAFWKGMGGNYPEHRFNIIDTPGHVDFTIEVERSMRVLDGACMVYCAVGGVQPQSETVWRQANKYKVPRLAFVNKMDRTGANFFKVYDQLKTRLKANPVPVVVPIGAEDGFQGVVDLLEMKAIIWDEASQGVKFEYQDIPAELQATADEWREKMVESAAEASEELMEKYLGGEELTRAEIVKALRDRTIACEIQPMLCGTAFKNKGVQRMLDAVIDFLPSPVDIPPVTGTDEDDSEKKLERKADDTEKFSALAFKIMTDPFVGQLIFFRVYSGKINSGDTVYNPVKQKKERLGRILQMHANQREEIKEVLAGDIAAAVGLKDATTGDTLCDPAAPIVLERMIFPEPVISQAVEPKTKADQEKMGIALNRLAAEDPSFRVRTDEESGQTIISGMGELHLEILVDRMKREFGVEANIGAPQVAYRETIRKTAEGVEGKFVKQSGGRGQYGHAVITLEPQEPGKGFEFIDAIKGGVIPREYIPAVEKGIVDTLPSGILAGFPVVDVKVTLTFGSYHDVDSNENAFRMAGSMAFKEAMRKASPVLLEPMMAVEVETPEDYTGTVMGDLSSRRGIVQGMDDMVGGGKIIKAEVPLSEMFGYSTSLRSATQGRATYTMEFKHYAEAPKNIAEAVMAAKGK.

Residues 8-290 (ERYRNIGISA…AVIDFLPSPV (283 aa)) form the tr-type G domain. Residues 17-24 (AHIDAGKT), 88-92 (DTPGH), and 142-145 (NKMD) contribute to the GTP site.

The protein belongs to the TRAFAC class translation factor GTPase superfamily. Classic translation factor GTPase family. EF-G/EF-2 subfamily.

Its subcellular location is the cytoplasm. Functionally, catalyzes the GTP-dependent ribosomal translocation step during translation elongation. During this step, the ribosome changes from the pre-translocational (PRE) to the post-translocational (POST) state as the newly formed A-site-bound peptidyl-tRNA and P-site-bound deacylated tRNA move to the P and E sites, respectively. Catalyzes the coordinated movement of the two tRNA molecules, the mRNA and conformational changes in the ribosome. The sequence is that of Elongation factor G 1 from Cupriavidus pinatubonensis (strain JMP 134 / LMG 1197) (Cupriavidus necator (strain JMP 134)).